A 359-amino-acid polypeptide reads, in one-letter code: Membrane-bound lytic murein transglycosylase C (359 aa).

The signal sequence occupies residues 1–16 (MKKYLALALIAPLLIS). Cys-17 carries the N-palmitoyl cysteine lipid modification. Cys-17 is lipidated: S-diacylglycerol cysteine.

This sequence belongs to the transglycosylase Slt family.

It is found in the cell outer membrane. The enzyme catalyses Exolytic cleavage of the (1-&gt;4)-beta-glycosidic linkage between N-acetylmuramic acid (MurNAc) and N-acetylglucosamine (GlcNAc) residues in peptidoglycan, from either the reducing or the non-reducing ends of the peptidoglycan chains, with concomitant formation of a 1,6-anhydrobond in the MurNAc residue.. Its function is as follows. Murein-degrading enzyme. May play a role in recycling of muropeptides during cell elongation and/or cell division. This Escherichia fergusonii (strain ATCC 35469 / DSM 13698 / CCUG 18766 / IAM 14443 / JCM 21226 / LMG 7866 / NBRC 102419 / NCTC 12128 / CDC 0568-73) protein is Membrane-bound lytic murein transglycosylase C.